A 186-amino-acid polypeptide reads, in one-letter code: Adenylate kinase (186 aa).

An ATP-binding site is contributed by 10 to 15 (GVGKGT). The NMP stretch occupies residues 30–59 (STGDIFRYNIKNKTELGLEAMSYTDKGELV). AMP contacts are provided by residues Thr31, Arg36, 57 to 59 (ELV), 85 to 88 (GYPR), and Gln92. The interval 126–136 (KRAAEQGRADD) is LID. Arg127 contributes to the ATP binding site. Residues Arg133 and Arg144 each coordinate AMP. Residue Gly172 coordinates ATP.

This sequence belongs to the adenylate kinase family. In terms of assembly, monomer.

The protein resides in the cytoplasm. It carries out the reaction AMP + ATP = 2 ADP. It participates in purine metabolism; AMP biosynthesis via salvage pathway; AMP from ADP: step 1/1. Catalyzes the reversible transfer of the terminal phosphate group between ATP and AMP. Plays an important role in cellular energy homeostasis and in adenine nucleotide metabolism. In Bifidobacterium longum (strain NCC 2705), this protein is Adenylate kinase.